The sequence spans 321 residues: L-carnitine dehydrogenase (321 aa).

14–19 provides a ligand contact to NAD(+); the sequence is GAGVIG.

Belongs to the 3-hydroxyacyl-CoA dehydrogenase family. L-carnitine dehydrogenase subfamily. Homodimer.

It localises to the cytoplasm. It catalyses the reaction carnitine + NAD(+) = 3-dehydrocarnitine + NADH + H(+). It functions in the pathway amine and polyamine metabolism; carnitine metabolism. Functionally, catalyzes the NAD(+)-dependent oxidation of L-carnitine to 3-dehydrocarnitine. This is L-carnitine dehydrogenase from Burkholderia mallei (strain ATCC 23344).